Reading from the N-terminus, the 405-residue chain is Probable tRNA sulfurtransferase (405 aa).

In terms of domain architecture, THUMP spans 60–165; it reads EPVNDRLKVV…QDGAYISNQL (106 aa). ATP is bound by residues 183–184, 208–209, Arg265, Gly287, and Gln296; these read ML and HF.

This sequence belongs to the ThiI family.

Its subcellular location is the cytoplasm. The enzyme catalyses [ThiI sulfur-carrier protein]-S-sulfanyl-L-cysteine + a uridine in tRNA + 2 reduced [2Fe-2S]-[ferredoxin] + ATP + H(+) = [ThiI sulfur-carrier protein]-L-cysteine + a 4-thiouridine in tRNA + 2 oxidized [2Fe-2S]-[ferredoxin] + AMP + diphosphate. It carries out the reaction [ThiS sulfur-carrier protein]-C-terminal Gly-Gly-AMP + S-sulfanyl-L-cysteinyl-[cysteine desulfurase] + AH2 = [ThiS sulfur-carrier protein]-C-terminal-Gly-aminoethanethioate + L-cysteinyl-[cysteine desulfurase] + A + AMP + 2 H(+). It participates in cofactor biosynthesis; thiamine diphosphate biosynthesis. Its function is as follows. Catalyzes the ATP-dependent transfer of a sulfur to tRNA to produce 4-thiouridine in position 8 of tRNAs, which functions as a near-UV photosensor. Also catalyzes the transfer of sulfur to the sulfur carrier protein ThiS, forming ThiS-thiocarboxylate. This is a step in the synthesis of thiazole, in the thiamine biosynthesis pathway. The sulfur is donated as persulfide by IscS. This is Probable tRNA sulfurtransferase from Lactobacillus delbrueckii subsp. bulgaricus (strain ATCC BAA-365 / Lb-18).